Reading from the N-terminus, the 242-residue chain is Phosphatidylethanolamine-binding protein 4 (242 aa).

Positions 1–26 are cleaved as a signal peptide; the sequence is MTMKLVAAALCLSLLAAGLWVGLSLT. The tract at residues 31–50 is disordered; sequence EEGKPGGEKPGGGKPGGSGR. Residues 38-50 are compositionally biased toward gly residues; it reads EKPGGGKPGGSGR. Residues asparagine 77 and asparagine 139 are each glycosylated (N-linked (GlcNAc...) asparagine). The important for secretion stretch occupies residues 210–242; the sequence is DPDTSTQFMTQFDEELSSEFGRINDDQEQFNQK.

Belongs to the phosphatidylethanolamine-binding protein family.

Its subcellular location is the secreted. Functionally, promotes AKT phosphorylation, suggesting a possible role in the PI3K-AKT signaling pathway. This Mus musculus (Mouse) protein is Phosphatidylethanolamine-binding protein 4 (Pebp4).